Consider the following 267-residue polypeptide: MTTTDLKPILVFDSGIGGLTVLREARVLMPERHFIYVADDAGFPYGGWEEGALKERVIALFGDLLREHDPEICIIACNTAFTLVGADLRAAYPQMTFVGTVPAIKPAAERTRSGLVSVLATPGTVKRAYTRDLIQSFASQCHVRLVGSENLARMAEAYIRGEKLEDEIVLAEIAPCFVEMDGRKTDIVVLACTHYPFMENVFRRLAPWPVDWLDPAEAIARRARSLVPLPNGFEPLNGEDPAIFTSGKPDFATRRLMQGFGLTVRSA.

Substrate is bound by residues 13-14 (DS) and 45-46 (YG). The Proton donor/acceptor role is filled by Cys-77. Residue 78–79 (NT) coordinates substrate. Cys-192 functions as the Proton donor/acceptor in the catalytic mechanism. 193-194 (TH) contributes to the substrate binding site.

It belongs to the aspartate/glutamate racemases family.

The catalysed reaction is L-glutamate = D-glutamate. Its pathway is cell wall biogenesis; peptidoglycan biosynthesis. In terms of biological role, provides the (R)-glutamate required for cell wall biosynthesis. The chain is Glutamate racemase from Sinorhizobium fredii (strain NBRC 101917 / NGR234).